We begin with the raw amino-acid sequence, 325 residues long: Cyclic AMP-responsive element-binding protein 1 (325 aa).

Polar residues-rich tracts occupy residues 1-11 and 18-27; these read MESGAENQQSG and AESQQMTVQA. Disordered stretches follow at residues 1–27 and 92–111; these read MESG…TVQA and SEDS…RREI. The region spanning 85 to 144 is the KID domain; the sequence is QISTIAESEDSQESVDSVTDSQKRREILSRRPSYRKILNDLSSDAPGVPRIEEEKSEEET. Ser-117 carries the post-translational modification Phosphoserine; by CaMK1, CaMK2, CaMK4, PKB/AKT1 or PKB/AKT2, RPS6KA3, RPS6KA4, RPS6KA5 and SGK1. Lys-120 is covalently cross-linked (Glycyl lysine isopeptide (Lys-Gly) (interchain with G-Cter in SUMO2)). Positions 124–146 are disordered; sequence DLSSDAPGVPRIEEEKSEEETSA. Ser-126 carries the post-translational modification Phosphoserine; by CaMK2. Ser-255 bears the Phosphoserine; by HIPK2 mark. One can recognise a bZIP domain in the interval 267-325; that stretch reads ARKREVRLMKNREAARECRRKKKEYVKCLENRVAVLENQNKTLIEELKALKDLYCHKSD. The interval 268-293 is basic motif; it reads RKREVRLMKNREAARECRRKKKEYVK. Glycyl lysine isopeptide (Lys-Gly) (interchain with G-Cter in SUMO1) cross-links involve residues Lys-269 and Lys-288. The segment at 295–316 is leucine-zipper; it reads LENRVAVLENQNKTLIEELKAL.

This sequence belongs to the bZIP family. In terms of assembly, interacts with PPRC1. Binds DNA as a dimer. This dimer is stabilized by magnesium ions. Interacts, through the bZIP domain, with the coactivators CRTC1/TORC1, CRTC2/TORC2 and CRTC3/TORC3. When phosphorylated on Ser-117, binds CREBBP. Interacts with CREBL2; regulates CREB1 phosphorylation, stability and transcriptional activity. Interacts (phosphorylated form) with TOX3. Interacts with ARRB1. Binds to HIPK2. Interacts with SGK1. Interacts with TSSK4; this interaction facilitates phosphorylation on Ser-117. Forms a complex with KMT2A and CREBBP. Interacts with TOX4; CREB1 is required for full induction of TOX4-dependent activity and the interaction is increased by cAMP and inhibited by insulin. Sumoylated with SUMO1. Sumoylation on Lys-288, but not on Lys-269, is required for nuclear localization of this protein. Sumoylation is enhanced under hypoxia, promoting nuclear localization and stabilization. In terms of processing, stimulated by phosphorylation. Phosphorylation of both Ser-117 and Ser-126 in the SCN regulates the activity of CREB and participates in circadian rhythm generation. Phosphorylation of Ser-117 allows CREBBP binding. Phosphorylated upon calcium influx by CaMK4 and CaMK2 on Ser-117. CaMK4 is much more potent than CaMK2 in activating CREB. Phosphorylated by CaMK2 on Ser-126. Phosphorylation of Ser-126 blocks CREB-mediated transcription even when Ser-117 is phosphorylated. Phosphorylated by CaMK1. Phosphorylation of Ser-255 by HIPK2 in response to genotoxic stress promotes CREB1 activity, facilitating the recruitment of the coactivator CBP. Phosphorylated at Ser-117 by RPS6KA3, RPS6KA4 and RPS6KA5 in response to mitogenic or stress stimuli. CREBL2 positively regulates phosphorylation at Ser-117 thereby stimulating CREB1 transcriptional activity. In liver, phosphorylation is induced by fasting or glucagon in a circadian fashion. Phosphorylated by TSSK4 on Ser-117.

The protein localises to the nucleus. In terms of biological role, phosphorylation-dependent transcription factor that stimulates transcription upon binding to the DNA cAMP response element (CRE), a sequence present in many viral and cellular promoters. Transcription activation is enhanced by the TORC coactivators which act independently of Ser-117 phosphorylation. Involved in different cellular processes including the synchronization of circadian rhythmicity and the differentiation of adipose cells. Regulates the expression of apoptotic and inflammatory response factors in cardiomyocytes in response to ERFE-mediated activation of AKT signaling. The chain is Cyclic AMP-responsive element-binding protein 1 (CREB1) from Bos taurus (Bovine).